A 158-amino-acid polypeptide reads, in one-letter code: Ribosome maturation factor RimP (158 aa).

This sequence belongs to the RimP family.

It localises to the cytoplasm. Its function is as follows. Required for maturation of 30S ribosomal subunits. This chain is Ribosome maturation factor RimP, found in Streptococcus uberis (strain ATCC BAA-854 / 0140J).